Reading from the N-terminus, the 262-residue chain is WUSCHEL-related homeobox 11 (262 aa).

The segment covering 1 to 11 (MDGGHSPDRHA) has biased composition (basic and acidic residues). Disordered regions lie at residues 1 to 21 (MDGG…PVRS) and 79 to 115 (RRRQ…GHAG). Residues 18 to 82 (PVRSRWTPKP…NRRSRSRRRQ (65 aa)) constitute a DNA-binding region (homeobox). Over residues 84 to 112 (QLQAQAQAAAAAASSGSPPTASSGGLAPG) the composition is skewed to low complexity.

This sequence belongs to the WUS homeobox family. Interacts with ERF3.

The protein localises to the nucleus. In terms of biological role, transcription factor which may be involved in developmental processes. Promotes the development of crown roots (both initiation and elongation), main components of the fibrous root system, by regulating the expression of genes required for crown root development and hormone-responsive genes involved in cytokinin (e.g. RR1, RR2, RR3 and RR4) and auxin (e.g. IAA5, IAA11, IAA23 and IAA31) signaling. The protein is WUSCHEL-related homeobox 11 of Oryza sativa subsp. indica (Rice).